The primary structure comprises 157 residues: Transcriptional repressor NrdR (157 aa).

Positions 1–26 are disordered; that stretch reads MRCPKCGGSKSSVIDSRQAEDGNTIR. A zinc finger lies at 3 to 34; the sequence is CPKCGGSKSSVIDSRQAEDGNTIRRRRECEDC. Over residues 17–26 the composition is skewed to basic and acidic residues; the sequence is RQAEDGNTIR. Residues 49–139 form the ATP-cone domain; that stretch reads LVVVKKDGTR…VYRSFKDVGE (91 aa).

This sequence belongs to the NrdR family. It depends on Zn(2+) as a cofactor.

Functionally, negatively regulates transcription of bacterial ribonucleotide reductase nrd genes and operons by binding to NrdR-boxes. This chain is Transcriptional repressor NrdR, found in Streptococcus gordonii (strain Challis / ATCC 35105 / BCRC 15272 / CH1 / DL1 / V288).